The chain runs to 558 residues: Formate--tetrahydrofolate ligase (558 aa).

An ATP-binding site is contributed by 67-74 (TPAGEGKT).

Belongs to the formate--tetrahydrofolate ligase family.

The catalysed reaction is (6S)-5,6,7,8-tetrahydrofolate + formate + ATP = (6R)-10-formyltetrahydrofolate + ADP + phosphate. It participates in one-carbon metabolism; tetrahydrofolate interconversion. The protein is Formate--tetrahydrofolate ligase of Roseobacter denitrificans (strain ATCC 33942 / OCh 114) (Erythrobacter sp. (strain OCh 114)).